A 223-amino-acid chain; its full sequence is Alpha-S2-casein (223 aa).

The N-terminal stretch at 1-15 (MKFFIFTCLLAVALA) is a signal peptide. Ser-23, Ser-24, Ser-25, Ser-72, Ser-73, Ser-74, Ser-77, Ser-145, Ser-147, Ser-151, and Ser-159 each carry phosphoserine. A repeat spans 77–141 (SAEVAPEEVK…AGPFTPTVNR (65 aa)). A repeat spans 159 to 223 (STEVFTKKTK…TNAIPYVRYL (65 aa)).

The protein belongs to the alpha-casein family. As to expression, mammary gland specific. Secreted in milk.

The protein resides in the secreted. In terms of biological role, important role in the capacity of milk to transport calcium phosphate. This is Alpha-S2-casein (CSN1S2) from Ovis aries (Sheep).